Here is a 79-residue protein sequence, read N- to C-terminus: D-alanyl carrier protein (79 aa).

One can recognise a Carrier domain in the interval 1–77; the sequence is MDVKETILNI…KIISGVVELM (77 aa). S35 carries the O-(pantetheine 4'-phosphoryl)serine modification.

Belongs to the DltC family. In terms of processing, 4'-phosphopantetheine is transferred from CoA to a specific serine of apo-DCP.

It localises to the cytoplasm. It functions in the pathway cell wall biogenesis; lipoteichoic acid biosynthesis. Functionally, carrier protein involved in the D-alanylation of lipoteichoic acid (LTA). The loading of thioester-linked D-alanine onto DltC is catalyzed by D-alanine--D-alanyl carrier protein ligase DltA. The DltC-carried D-alanyl group is further transferred to cell membrane phosphatidylglycerol (PG) by forming an ester bond, probably catalyzed by DltD. D-alanylation of LTA plays an important role in modulating the properties of the cell wall in Gram-positive bacteria, influencing the net charge of the cell wall. The polypeptide is D-alanyl carrier protein (Streptococcus suis (strain 98HAH33)).